A 472-amino-acid chain; its full sequence is MAKCGSCGPGYKSPLDAMKGPREEIVYLPCIYRSTGINKPDYLATVDVDPKSPSYSQVIHRLPMPNVNDELHHSGWNTCSSCYGDSSKVRNKLILPCLISSRIYVVDVGSDPRAPRIHKTVEPYEVFWKCGLANPHTSHCLGCGEIMISSLGDPCGNGKGGFVLLDGETFEVKGNWEVEGESAQFGYDFWYQPRHNVMISTEWGAPKAFALGFKMEDVQAGHYGHSLNVWDWTEHRLVQTIDLGKDGLIPLEIRFLHNPDADQGLVGCALSSSIFRFYKEKDGKWAAEKVIQVPSKKVEGWPMPEMPGLITDILISLDDRFLYFSNWLHGDIRQYDITDTRNPKLVGQIFLGGSIQRGGPVTVLEDKELECQPDPVTVKGKIIPGGPQMIQLSLDGKRIYVTSSLYSIWDKQFYPDLLKEGAVMLQIDVDTKKGGLKLNPNFLVDFGKEPDGPVLAHEIRYPGGDCTSDIWI.

It belongs to the selenium-binding protein family.

It localises to the nucleus. The protein localises to the cytoplasm. The protein resides in the cytosol. It is found in the membrane. It carries out the reaction methanethiol + O2 + H2O = hydrogen sulfide + formaldehyde + H2O2 + H(+). It functions in the pathway organosulfur degradation. Functionally, catalyzes the oxidation of methanethiol, an organosulfur compound known to be produced in substantial amounts by gut bacteria. Selenium-binding protein which may be involved in the sensing of reactive xenobiotics in the cytoplasm. May be involved in intra-Golgi protein transport. The protein is Methanethiol oxidase (selenbp1-a) of Xenopus laevis (African clawed frog).